A 259-amino-acid polypeptide reads, in one-letter code: DnaJ homolog subfamily C member 9 (259 aa).

The J domain maps to 15–82 (DLYQVLGVRR…EQKAVYDEQG (68 aa)). Residue S109 is modified to Phosphoserine. A required for histone binding region spans residues 171 to 248 (EIPAYSAFVK…EAKYCKPSKG (78 aa)).

Forms a co-chaperone complex with MCM2 and histone H3.3-H4 dimers. Within the complex, interacts (via C-terminus) with MCM2 (via N-terminus); the interaction is histone-dependent. Within the complex, interacts (via C-terminus) with histone H3.3-H4 heterodimers; the interaction is direct. Interacts with histones H4, H3.3, H3.2 and H3.1, but not with CENPA or the testis-specific histone H3.1t. Interacts (via J domain) with HSPA1A, HSPA1B and HSPA8. May interact with TONSL; the interaction seems to be histone-dependent. May interact with HSPA8 and BAG2; the interactions seem to be histone-dependent.

The protein resides in the nucleus. The protein localises to the cytoplasm. It localises to the cell membrane. Functionally, acts as a dual histone chaperone and heat shock co-chaperone. As a histone chaperone, forms a co-chaperone complex with MCM2 and histone H3-H4 heterodimers; and may thereby assist MCM2 in histone H3-H4 heterodimer recognition and facilitate the assembly of histones into nucleosomes. May also act as a histone co-chaperone together with TONSL. May recruit histone chaperones ASF1A, NASP and SPT2 to histone H3-H4 heterodimers. Also plays a role as co-chaperone of the HSP70 family of molecular chaperone proteins, such as HSPA1A, HSPA1B and HSPA8. As a co-chaperone, may play a role in the recruitment of HSP70-type molecular chaperone machinery to histone H3-H4 substrates, thereby maintaining the histone structural integrity. Exhibits activity to assemble histones onto DNA in vitro. In Mus musculus (Mouse), this protein is DnaJ homolog subfamily C member 9 (Dnajc9).